The sequence spans 90 residues: N(2)-fixation sustaining protein CowN (90 aa).

The protein belongs to the CowN family.

Functionally, is required to sustain N(2)-dependent growth in the presence of low levels of carbon monoxide (CO). Probably acts by protecting the N(2) fixation ability of the nitrogenase complex, which is inactivated in the presence of CO. The chain is N(2)-fixation sustaining protein CowN from Methylocella silvestris (strain DSM 15510 / CIP 108128 / LMG 27833 / NCIMB 13906 / BL2).